We begin with the raw amino-acid sequence, 211 residues long: MSVGILGTKLGMTQIFDEAGVAIPVTVVQVGPCVVTQVKSKQTDGYAAIQVGYGEVKPKALNRPLLGHLAKSSAPALRHLKEYHTDSSSDYALGQEIKADIFSAGELVDVIGTSIGRGFAGNQKRNNFGRGPMSHGSKNHRAPGSIGAGTTPGRVYPGKRMAGRLGGTRVTIRKLTVIRVDAERNLLLIKGAVPGKPGSLLSIVPAKKVGK.

Residues asparagine 122–proline 157 form a disordered region.

It belongs to the universal ribosomal protein uL3 family. Part of the 50S ribosomal subunit. Forms a cluster with proteins L14 and L19.

Its function is as follows. One of the primary rRNA binding proteins, it binds directly near the 3'-end of the 23S rRNA, where it nucleates assembly of the 50S subunit. This is Large ribosomal subunit protein uL3 from Trichormus variabilis (strain ATCC 29413 / PCC 7937) (Anabaena variabilis).